A 116-amino-acid chain; its full sequence is NADH-quinone oxidoreductase subunit A (116 aa).

3 helical membrane passes run 3 to 23 (FTFL…VIAL), 61 to 81 (FAIL…WAVV), and 88 to 108 (QGLV…AYAW).

This sequence belongs to the complex I subunit 3 family. As to quaternary structure, NDH-1 is composed of 14 different subunits. Subunits NuoA, H, J, K, L, M, N constitute the membrane sector of the complex.

The protein localises to the cell inner membrane. The enzyme catalyses a quinone + NADH + 5 H(+)(in) = a quinol + NAD(+) + 4 H(+)(out). Its function is as follows. NDH-1 shuttles electrons from NADH, via FMN and iron-sulfur (Fe-S) centers, to quinones in the respiratory chain. The immediate electron acceptor for the enzyme in this species is believed to be a menaquinone. Couples the redox reaction to proton translocation (for every two electrons transferred, four hydrogen ions are translocated across the cytoplasmic membrane), and thus conserves the redox energy in a proton gradient. This chain is NADH-quinone oxidoreductase subunit A, found in Bacteroides thetaiotaomicron (strain ATCC 29148 / DSM 2079 / JCM 5827 / CCUG 10774 / NCTC 10582 / VPI-5482 / E50).